The primary structure comprises 274 residues: Bis(5'-nucleosyl)-tetraphosphatase, symmetrical (274 aa).

This sequence belongs to the Ap4A hydrolase family.

The enzyme catalyses P(1),P(4)-bis(5'-adenosyl) tetraphosphate + H2O = 2 ADP + 2 H(+). Hydrolyzes diadenosine 5',5'''-P1,P4-tetraphosphate to yield ADP. In Buchnera aphidicola subsp. Acyrthosiphon pisum (strain 5A), this protein is Bis(5'-nucleosyl)-tetraphosphatase, symmetrical.